We begin with the raw amino-acid sequence, 318 residues long: Molybdenum cofactor insertion chaperone PaoD (318 aa).

As to quaternary structure, homodimer in solution. Interacts with MocA.

Its function is as follows. Chaperone required for the production of an active PaoABC aldehyde oxidoreductase. Stabilizes the PaoC subunit and is required for the insertion of the molybdenum cofactor into this subunit. Binds molybdenum cofactor. Binds the molybdopterin cytosine dinucleotide (MCD) form of the cofactor after its formation by the molybdenum cofactor cytidylyltransferase MocA. The chain is Molybdenum cofactor insertion chaperone PaoD from Escherichia coli (strain K12).